We begin with the raw amino-acid sequence, 200 residues long: MFEYLTGLITMVSPDFIVVDVNGVGYRVAVANPYAYQEDDQQAVQVFIYQAVKEDAITLFGFATQAEKRLFTQLIGVSGIGPKSALAILATPDHQGLIDAIQNGDDKYLSKFPGIGKKTASRIIIELKDKVVAVQDEVQLDFTAPGPLGPSAALQDALAALESLGYTTKQVERVQKQLEGLQGELSTNDYLSQGLKLLSR.

Positions 1 to 63 are domain I; it reads MFEYLTGLIT…EDAITLFGFA (63 aa). The domain II stretch occupies residues 64–142; the sequence is TQAEKRLFTQ…AVQDEVQLDF (79 aa). The interval 143–151 is flexible linker; the sequence is TAPGPLGPS. The tract at residues 151-200 is domain III; it reads SAALQDALAALESLGYTTKQVERVQKQLEGLQGELSTNDYLSQGLKLLSR.

This sequence belongs to the RuvA family. In terms of assembly, homotetramer. Forms an RuvA(8)-RuvB(12)-Holliday junction (HJ) complex. HJ DNA is sandwiched between 2 RuvA tetramers; dsDNA enters through RuvA and exits via RuvB. An RuvB hexamer assembles on each DNA strand where it exits the tetramer. Each RuvB hexamer is contacted by two RuvA subunits (via domain III) on 2 adjacent RuvB subunits; this complex drives branch migration. In the full resolvosome a probable DNA-RuvA(4)-RuvB(12)-RuvC(2) complex forms which resolves the HJ.

It is found in the cytoplasm. The RuvA-RuvB-RuvC complex processes Holliday junction (HJ) DNA during genetic recombination and DNA repair, while the RuvA-RuvB complex plays an important role in the rescue of blocked DNA replication forks via replication fork reversal (RFR). RuvA specifically binds to HJ cruciform DNA, conferring on it an open structure. The RuvB hexamer acts as an ATP-dependent pump, pulling dsDNA into and through the RuvAB complex. HJ branch migration allows RuvC to scan DNA until it finds its consensus sequence, where it cleaves and resolves the cruciform DNA. The polypeptide is Holliday junction branch migration complex subunit RuvA (Limosilactobacillus fermentum (strain NBRC 3956 / LMG 18251) (Lactobacillus fermentum)).